The chain runs to 184 residues: Peptidyl-tRNA hydrolase (184 aa).

Position 14 (tyrosine 14) interacts with tRNA. The Proton acceptor role is filled by histidine 19. TRNA contacts are provided by phenylalanine 64, asparagine 66, and asparagine 112.

The protein belongs to the PTH family. Monomer.

It localises to the cytoplasm. It catalyses the reaction an N-acyl-L-alpha-aminoacyl-tRNA + H2O = an N-acyl-L-amino acid + a tRNA + H(+). Hydrolyzes ribosome-free peptidyl-tRNAs (with 1 or more amino acids incorporated), which drop off the ribosome during protein synthesis, or as a result of ribosome stalling. Its function is as follows. Catalyzes the release of premature peptidyl moieties from peptidyl-tRNA molecules trapped in stalled 50S ribosomal subunits, and thus maintains levels of free tRNAs and 50S ribosomes. This Listeria welshimeri serovar 6b (strain ATCC 35897 / DSM 20650 / CCUG 15529 / CIP 8149 / NCTC 11857 / SLCC 5334 / V8) protein is Peptidyl-tRNA hydrolase.